The sequence spans 184 residues: Orotate phosphoribosyltransferase (184 aa).

Residues R99, K100, K103, H105, and 125–133 (EDTTTTGNS) contribute to the 5-phospho-alpha-D-ribose 1-diphosphate site. Orotate contacts are provided by T129 and R157.

Belongs to the purine/pyrimidine phosphoribosyltransferase family. PyrE subfamily. In terms of assembly, homodimer. Mg(2+) is required as a cofactor.

The catalysed reaction is orotidine 5'-phosphate + diphosphate = orotate + 5-phospho-alpha-D-ribose 1-diphosphate. Its pathway is pyrimidine metabolism; UMP biosynthesis via de novo pathway; UMP from orotate: step 1/2. Its function is as follows. Catalyzes the transfer of a ribosyl phosphate group from 5-phosphoribose 1-diphosphate to orotate, leading to the formation of orotidine monophosphate (OMP). The chain is Orotate phosphoribosyltransferase from Corynebacterium glutamicum (strain R).